The following is a 68-amino-acid chain: MKASDVRDMTPDQLQDELLKLKKTQFNLRFQGASGQLEKVHQMRQVRRDIARIKTIQRQRSAETASKS.

It belongs to the universal ribosomal protein uL29 family.

The sequence is that of Large ribosomal subunit protein uL29 from Parvibaculum lavamentivorans (strain DS-1 / DSM 13023 / NCIMB 13966).